We begin with the raw amino-acid sequence, 156 residues long: Small ribosomal subunit protein uS7 (156 aa).

It belongs to the universal ribosomal protein uS7 family. Part of the 30S ribosomal subunit. Contacts proteins S9 and S11.

One of the primary rRNA binding proteins, it binds directly to 16S rRNA where it nucleates assembly of the head domain of the 30S subunit. Is located at the subunit interface close to the decoding center, probably blocks exit of the E-site tRNA. This chain is Small ribosomal subunit protein uS7, found in Pseudomonas aeruginosa (strain LESB58).